The following is a 161-amino-acid chain: MPSMDIVSEVDEVELRNAVENSVRELKSRFDFRGKEASIEYKDHVVTLSAEDDFQCQQLVDILRMQMSKRSVDPASMDVDEKALHSGKTFSLKVRFKEGIETLIAKKLVKMIKDSKLKVQSSIQGDSVRVTGKKRDDLQAVMALARESELGQPFQFNNFRD.

Belongs to the YajQ family.

Functionally, nucleotide-binding protein. This is Nucleotide-binding protein Ssed_3443 from Shewanella sediminis (strain HAW-EB3).